A 257-amino-acid chain; its full sequence is NAD-capped RNA hydrolase NudC (257 aa).

Arg-69 serves as a coordination point for substrate. Cys-98 and Cys-101 together coordinate Zn(2+). Residue Glu-111 coordinates substrate. The Zn(2+) site is built by Cys-116 and Cys-119. Tyr-124 lines the substrate pocket. One can recognise a Nudix hydrolase domain in the interval 125–248; it reads PQIAPCIIVA…TVARRLIEDT (124 aa). A divalent metal cation is bound by residues Ala-158, Glu-174, and Glu-178. The Nudix box motif lies at 159 to 180; the sequence is GFVEVGETLEQAVAREVMEESG. Position 192-199 (192-199) interacts with substrate; the sequence is QPWPFPQS. Position 219 (Glu-219) interacts with a divalent metal cation. Ala-241 serves as a coordination point for substrate.

This sequence belongs to the Nudix hydrolase family. NudC subfamily. Homodimer. It depends on Mg(2+) as a cofactor. The cofactor is Mn(2+). Zn(2+) serves as cofactor.

It catalyses the reaction a 5'-end NAD(+)-phospho-ribonucleoside in mRNA + H2O = a 5'-end phospho-adenosine-phospho-ribonucleoside in mRNA + beta-nicotinamide D-ribonucleotide + 2 H(+). It carries out the reaction NAD(+) + H2O = beta-nicotinamide D-ribonucleotide + AMP + 2 H(+). The catalysed reaction is NADH + H2O = reduced beta-nicotinamide D-ribonucleotide + AMP + 2 H(+). MRNA decapping enzyme that specifically removes the nicotinamide adenine dinucleotide (NAD) cap from a subset of mRNAs by hydrolyzing the diphosphate linkage to produce nicotinamide mononucleotide (NMN) and 5' monophosphate mRNA. The NAD-cap is present at the 5'-end of some mRNAs and stabilizes RNA against 5'-processing. Has preference for mRNAs with a 5'-end purine. Catalyzes the hydrolysis of a broad range of dinucleotide pyrophosphates. The polypeptide is NAD-capped RNA hydrolase NudC (Salmonella schwarzengrund (strain CVM19633)).